The sequence spans 614 residues: UvrABC system protein C (614 aa).

The GIY-YIG domain occupies 26 to 104 (NLPGVYKMLG…IKEYRPPYNV (79 aa)). The 36-residue stretch at 215–250 (SDIHSALIEKMEASAEELDFEKAVFYRDQLSMLREV) folds into the UVR domain.

This sequence belongs to the UvrC family. Interacts with UvrB in an incision complex.

Its subcellular location is the cytoplasm. Its function is as follows. The UvrABC repair system catalyzes the recognition and processing of DNA lesions. UvrC both incises the 5' and 3' sides of the lesion. The N-terminal half is responsible for the 3' incision and the C-terminal half is responsible for the 5' incision. The polypeptide is UvrABC system protein C (Psychrobacter arcticus (strain DSM 17307 / VKM B-2377 / 273-4)).